Reading from the N-terminus, the 157-residue chain is 2-C-methyl-D-erythritol 2,4-cyclodiphosphate synthase (157 aa).

Residues Asp8 and His10 each coordinate a divalent metal cation. Residues 8 to 10 (DVH) and 34 to 35 (HS) contribute to the 4-CDP-2-C-methyl-D-erythritol 2-phosphate site. Residue His42 coordinates a divalent metal cation. Residues 56-58 (DIG), 61-65 (FPDTD), 100-106 (AQAPKML), 132-135 (TTTE), Phe139, and Arg142 contribute to the 4-CDP-2-C-methyl-D-erythritol 2-phosphate site.

Belongs to the IspF family. As to quaternary structure, homotrimer. A divalent metal cation is required as a cofactor.

The catalysed reaction is 4-CDP-2-C-methyl-D-erythritol 2-phosphate = 2-C-methyl-D-erythritol 2,4-cyclic diphosphate + CMP. It participates in isoprenoid biosynthesis; isopentenyl diphosphate biosynthesis via DXP pathway; isopentenyl diphosphate from 1-deoxy-D-xylulose 5-phosphate: step 4/6. Involved in the biosynthesis of isopentenyl diphosphate (IPP) and dimethylallyl diphosphate (DMAPP), two major building blocks of isoprenoid compounds. Catalyzes the conversion of 4-diphosphocytidyl-2-C-methyl-D-erythritol 2-phosphate (CDP-ME2P) to 2-C-methyl-D-erythritol 2,4-cyclodiphosphate (ME-CPP) with a corresponding release of cytidine 5-monophosphate (CMP). This is 2-C-methyl-D-erythritol 2,4-cyclodiphosphate synthase from Erwinia tasmaniensis (strain DSM 17950 / CFBP 7177 / CIP 109463 / NCPPB 4357 / Et1/99).